The chain runs to 644 residues: Exoribonuclease 2 (644 aa).

The RNB domain occupies 189–516 (REDLTALNFV…NHRLLKAIIT (328 aa)). An S1 motif domain is found at 561-643 (DTRFPAEIID…ETRNVVARPV (83 aa)).

Belongs to the RNR ribonuclease family. RNase II subfamily.

It localises to the cytoplasm. The catalysed reaction is Exonucleolytic cleavage in the 3'- to 5'-direction to yield nucleoside 5'-phosphates.. Involved in mRNA degradation. Hydrolyzes single-stranded polyribonucleotides processively in the 3' to 5' direction. The chain is Exoribonuclease 2 from Yersinia enterocolitica serotype O:8 / biotype 1B (strain NCTC 13174 / 8081).